Consider the following 152-residue polypeptide: Deoxyuridine 5'-triphosphate nucleotidohydrolase (152 aa).

Residues 71–73 (RSG), asparagine 84, 88–90 (LID), and methionine 98 contribute to the substrate site.

The protein belongs to the dUTPase family. Mg(2+) is required as a cofactor.

It catalyses the reaction dUTP + H2O = dUMP + diphosphate + H(+). It functions in the pathway pyrimidine metabolism; dUMP biosynthesis; dUMP from dCTP (dUTP route): step 2/2. This enzyme is involved in nucleotide metabolism: it produces dUMP, the immediate precursor of thymidine nucleotides and it decreases the intracellular concentration of dUTP so that uracil cannot be incorporated into DNA. In Pectobacterium carotovorum subsp. carotovorum (strain PC1), this protein is Deoxyuridine 5'-triphosphate nucleotidohydrolase.